An 86-amino-acid chain; its full sequence is MIHPSYVELMKVVNNNVEIGEEPVVNSRYSIVIAAAKRARQIIDGAEPLIAHPKCNKPLSIAVEELYTGAVRIVSDDEDLNEGEEA.

Belongs to the RNA polymerase subunit omega family. In terms of assembly, the RNAP catalytic core consists of 2 alpha, 1 beta, 1 beta' and 1 omega subunit. When a sigma factor is associated with the core the holoenzyme is formed, which can initiate transcription.

It carries out the reaction RNA(n) + a ribonucleoside 5'-triphosphate = RNA(n+1) + diphosphate. Promotes RNA polymerase assembly. Latches the N- and C-terminal regions of the beta' subunit thereby facilitating its interaction with the beta and alpha subunits. The polypeptide is DNA-directed RNA polymerase subunit omega (Agathobacter rectalis (strain ATCC 33656 / DSM 3377 / JCM 17463 / KCTC 5835 / VPI 0990) (Eubacterium rectale)).